Here is a 366-residue protein sequence, read N- to C-terminus: ABI gene family member 3 (366 aa).

The stretch at 33–61 forms a coiled coil; the sequence is CEDNYVQATDKRKALEETMAFTTQALASV. The tract at residues 161-195 is disordered; it reads SRTGTLSRKSIKAPATPASATLGRPPRIPEPVHLP. Phosphoserine occurs at positions 213 and 216. Residues 215–302 are disordered; sequence GSAEGVGGAP…PPPGFGPDEP (88 aa). Residues 232 to 248 are compositionally biased toward pro residues; sequence PPAPPLPSSLDPPPPPA. One can recognise an SH3 domain in the interval 308 to 366; the sequence is SYLEKVVTLYPYTSQKDNELSFSEGTVICVTRRYSDGWCEGVSSEGTGFFPGNYVEPSC. The residue at position 342 (Ser342) is a Phosphoserine.

It belongs to the ABI family. In terms of assembly, may interact with PAK1 and PAK2. Probably interacts with TARSH. In terms of tissue distribution, expressed in heart, lung, liver, pancreas, kidney, placenta and at low levels in brain and skeletal muscle.

The protein resides in the cytoplasm. May inhibit tumor metastasis. In vitro, reduces cell motility. The chain is ABI gene family member 3 (ABI3) from Homo sapiens (Human).